Here is a 599-residue protein sequence, read N- to C-terminus: Sodium-dependent phosphate transport protein 2C (599 aa).

Over methionine 1–alanine 76 the chain is Cytoplasmic. A Phosphoserine modification is found at serine 4. The chain crosses the membrane as a helical span at residues cysteine 77 to phenylalanine 97. Residues glutamine 98–aspartate 111 lie on the Extracellular side of the membrane. The helical transmembrane segment at asparagine 112 to valine 132 threads the bilayer. The Cytoplasmic portion of the chain corresponds to glutamine 133–alanine 188. Residues phenylalanine 189–leucine 209 form a helical membrane-spanning segment. Topologically, residues glutamate 210 to alanine 322 are extracellular. 4 N-linked (GlcNAc...) asparagine glycosylation sites follow: asparagine 265, asparagine 268, asparagine 286, and asparagine 299. A disulfide bond links cysteine 276 and cysteine 309. The chain crosses the membrane as a helical span at residues valine 323–valine 343. The Cytoplasmic portion of the chain corresponds to lysine 344–proline 367. Residues phenylalanine 368–alanine 388 traverse the membrane as a helical segment. The Extracellular segment spans residues leucine 389–glutamine 445. The chain crosses the membrane as a helical span at residues valine 446–alanine 466. At leucine 467 to arginine 485 the chain is on the cytoplasmic side. A helical membrane pass occupies residues tryptophan 486–leucine 506. Over serine 507–glycine 510 the chain is Extracellular. The chain crosses the membrane as a helical span at residues glycine 511 to valine 531. The Cytoplasmic portion of the chain corresponds to threonine 532–leucine 599.

The protein belongs to the SLC34A transporter family. Expressed only in the kidney.

The protein localises to the apical cell membrane. It carries out the reaction 2 Na(+)(out) + phosphate(out) = 2 Na(+)(in) + phosphate(in). Its function is as follows. Involved in actively transporting phosphate into cells via Na(+) cotransport in the renal brush border membrane. The cotransport has a Na(+):Pi stoichiometry of 2:1 and is electroneutral. The protein is Sodium-dependent phosphate transport protein 2C (SLC34A3) of Homo sapiens (Human).